Consider the following 191-residue polypeptide: Small ribosomal subunit protein uS4A (191 aa).

Serine 50 and serine 161 each carry phosphoserine. An S4 RNA-binding domain is found at 107–181 (RRLQTQVFKL…CKRKRLRSQE (75 aa)). At tyrosine 164 the chain carries Phosphotyrosine. The interval 166–191 (GGRPGRCKRKRLRSQEGGEGEEAEEE) is disordered. Serine 179 bears the Phosphoserine mark.

It belongs to the universal ribosomal protein uS4 family. As to quaternary structure, component of the small ribosomal subunit (SSU). Mature yeast ribosomes consist of a small (40S) and a large (60S) subunit. The 40S small subunit contains 1 molecule of ribosomal RNA (18S rRNA) and at least 33 different proteins. The large 60S subunit contains 3 rRNA molecules (25S, 5.8S and 5S rRNA) and at least 46 different proteins. Interacts with snoRNA U3. uS11 interacts with MPP10. Component of the ribosomal small subunit (SSU) processome composed of at least 40 protein subunits and snoRNA U3.

The protein resides in the cytoplasm. Its function is as follows. Component of the ribosome, a large ribonucleoprotein complex responsible for the synthesis of proteins in the cell. The small ribosomal subunit (SSU) binds messenger RNAs (mRNAs) and translates the encoded message by selecting cognate aminoacyl-transfer RNA (tRNA) molecules. The large subunit (LSU) contains the ribosomal catalytic site termed the peptidyl transferase center (PTC), which catalyzes the formation of peptide bonds, thereby polymerizing the amino acids delivered by tRNAs into a polypeptide chain. The nascent polypeptides leave the ribosome through a tunnel in the LSU and interact with protein factors that function in enzymatic processing, targeting, and the membrane insertion of nascent chains at the exit of the ribosomal tunnel. uS4 is involved in nucleolar processing of pre-18S ribosomal RNA and ribosome assembly. The protein is Small ribosomal subunit protein uS4A (rps901) of Schizosaccharomyces pombe (strain 972 / ATCC 24843) (Fission yeast).